A 295-amino-acid polypeptide reads, in one-letter code: NAD kinase (295 aa).

Catalysis depends on Asp72, which acts as the Proton acceptor. Residues 72–73 (DG), 146–147 (ND), Arg157, Lys174, Asp176, 187–192 (TAYALS), and Gln247 contribute to the NAD(+) site.

It belongs to the NAD kinase family. It depends on a divalent metal cation as a cofactor.

It is found in the cytoplasm. It catalyses the reaction NAD(+) + ATP = ADP + NADP(+) + H(+). Involved in the regulation of the intracellular balance of NAD and NADP, and is a key enzyme in the biosynthesis of NADP. Catalyzes specifically the phosphorylation on 2'-hydroxyl of the adenosine moiety of NAD to yield NADP. This Pseudomonas aeruginosa (strain LESB58) protein is NAD kinase.